The chain runs to 474 residues: tRNA-2-methylthio-N(6)-dimethylallyladenosine synthase (474 aa).

The 118-residue stretch at 3-120 (KKLHIKTWGC…LPEMINHVQG (118 aa)) folds into the MTTase N-terminal domain. [4Fe-4S] cluster-binding residues include Cys12, Cys49, Cys83, Cys157, Cys161, and Cys164. The Radical SAM core domain occupies 143 to 375 (RAEGPTAFVS…QQRITQQAME (233 aa)). The region spanning 378–441 (REMVGTVQRI…ASSLRGILLR (64 aa)) is the TRAM domain.

Belongs to the methylthiotransferase family. MiaB subfamily. Monomer. [4Fe-4S] cluster serves as cofactor.

The protein localises to the cytoplasm. It carries out the reaction N(6)-dimethylallyladenosine(37) in tRNA + (sulfur carrier)-SH + AH2 + 2 S-adenosyl-L-methionine = 2-methylsulfanyl-N(6)-dimethylallyladenosine(37) in tRNA + (sulfur carrier)-H + 5'-deoxyadenosine + L-methionine + A + S-adenosyl-L-homocysteine + 2 H(+). Catalyzes the methylthiolation of N6-(dimethylallyl)adenosine (i(6)A), leading to the formation of 2-methylthio-N6-(dimethylallyl)adenosine (ms(2)i(6)A) at position 37 in tRNAs that read codons beginning with uridine. The sequence is that of tRNA-2-methylthio-N(6)-dimethylallyladenosine synthase from Yersinia enterocolitica serotype O:8 / biotype 1B (strain NCTC 13174 / 8081).